The primary structure comprises 207 residues: MSFVPYSLPELPYDYDALEPVISSEIMILHHQKHHQIYINNLNAALKRLDAAETQQNLNELIALEPALRFNGGGHINHSLFWETLAPIDQGGGQPPKHELLSLIERFWGTMDNFLKKLIEVAAGVQGSGWAWLGFCPAKQELVLQATANQDPLEPLTGKLPLLGVDVWEHAYYLQYKNVRMDYLKAFPQIINWGHIENRFSEIISSK.

4 residues coordinate Mn(2+): H30, H78, D166, and H170.

Belongs to the iron/manganese superoxide dismutase family. Homodimer. Mn(2+) is required as a cofactor.

It catalyses the reaction 2 superoxide + 2 H(+) = H2O2 + O2. Functionally, destroys superoxide anion radicals which are normally produced within the cells and which are toxic to biological systems. The protein is Superoxide dismutase [Mn] (sodA) of Chlamydia pneumoniae (Chlamydophila pneumoniae).